An 89-amino-acid polypeptide reads, in one-letter code: Cytochrome b-c1 complex subunit 6, mitochondrial (89 aa).

Residues 1 to 13 constitute a mitochondrion transit peptide; it reads MGLEDERKMLTGS. The interval 1-27 is disordered; sequence MGLEDERKMLTGSGDPKEEEEEELVDP. Disulfide bonds link C35-C79 and C51-C65. K40 carries the post-translational modification N6-acetyllysine. The residue at position 83 (K83) is an N6-acetyllysine.

It belongs to the UQCRH/QCR6 family. Component of the ubiquinol-cytochrome c oxidoreductase (cytochrome b-c1 complex, complex III, CIII), a multisubunit enzyme composed of 11 subunits. The complex is composed of 3 respiratory subunits cytochrome b, cytochrome c1 and Rieske protein UQCRFS1, 2 core protein subunits UQCRC1/QCR1 and UQCRC2/QCR2, and 6 low-molecular weight protein subunits UQCRH/QCR6, UQCRB/QCR7, UQCRQ/QCR8, UQCR10/QCR9, UQCR11/QCR10 and subunit 9, the cleavage product of Rieske protein UQCRFS1. The complex exists as an obligatory dimer and forms supercomplexes (SCs) in the inner mitochondrial membrane with NADH-ubiquinone oxidoreductase (complex I, CI) and cytochrome c oxidase (complex IV, CIV), resulting in different assemblies (supercomplex SCI(1)III(2)IV(1) and megacomplex MCI(2)III(2)IV(2)).

It localises to the mitochondrion inner membrane. Its function is as follows. Component of the ubiquinol-cytochrome c oxidoreductase, a multisubunit transmembrane complex that is part of the mitochondrial electron transport chain which drives oxidative phosphorylation. The respiratory chain contains 3 multisubunit complexes succinate dehydrogenase (complex II, CII), ubiquinol-cytochrome c oxidoreductase (cytochrome b-c1 complex, complex III, CIII) and cytochrome c oxidase (complex IV, CIV), that cooperate to transfer electrons derived from NADH and succinate to molecular oxygen, creating an electrochemical gradient over the inner membrane that drives transmembrane transport and the ATP synthase. The cytochrome b-c1 complex catalyzes electron transfer from ubiquinol to cytochrome c, linking this redox reaction to translocation of protons across the mitochondrial inner membrane, with protons being carried across the membrane as hydrogens on the quinol. In the process called Q cycle, 2 protons are consumed from the matrix, 4 protons are released into the intermembrane space and 2 electrons are passed to cytochrome c. The polypeptide is Cytochrome b-c1 complex subunit 6, mitochondrial (Uqcrh) (Rattus norvegicus (Rat)).